Consider the following 201-residue polypeptide: Small ribosomal subunit protein uS4 (201 aa).

The 65-residue stretch at 103 to 167 (RRLQTIVTKK…SKIPQVLEKT (65 aa)) folds into the S4 RNA-binding domain. A disordered region spans residues 163 to 201 (VLEKTKSEAPAEETVEAPAEETVEAPAEEKKEESPSTES). The span at 172 to 185 (PAEETVEAPAEETV) shows a compositional bias: acidic residues. Positions 189–201 (AEEKKEESPSTES) are enriched in basic and acidic residues.

This sequence belongs to the universal ribosomal protein uS4 family. As to quaternary structure, part of the 30S ribosomal subunit. Contacts protein S5. The interaction surface between S4 and S5 is involved in control of translational fidelity.

Functionally, one of the primary rRNA binding proteins, it binds directly to 16S rRNA where it nucleates assembly of the body of the 30S subunit. In terms of biological role, with S5 and S12 plays an important role in translational accuracy. The polypeptide is Small ribosomal subunit protein uS4 (Nitrosopumilus maritimus (strain SCM1)).